We begin with the raw amino-acid sequence, 494 residues long: 3-octaprenyl-4-hydroxybenzoate carboxy-lyase (494 aa).

N172 is a Mn(2+) binding site. Prenylated FMN is bound by residues 175-177, 189-191, and 194-195; these read IYR, RWL, and RG. E238 provides a ligand contact to Mn(2+). D287 (proton donor) is an active-site residue.

Belongs to the UbiD family. As to quaternary structure, homohexamer. The cofactor is prenylated FMN. Requires Mn(2+) as cofactor.

Its subcellular location is the cell membrane. The enzyme catalyses a 4-hydroxy-3-(all-trans-polyprenyl)benzoate + H(+) = a 2-(all-trans-polyprenyl)phenol + CO2. It participates in cofactor biosynthesis; ubiquinone biosynthesis. Functionally, catalyzes the decarboxylation of 3-octaprenyl-4-hydroxy benzoate to 2-octaprenylphenol, an intermediate step in ubiquinone biosynthesis. This Erwinia tasmaniensis (strain DSM 17950 / CFBP 7177 / CIP 109463 / NCPPB 4357 / Et1/99) protein is 3-octaprenyl-4-hydroxybenzoate carboxy-lyase.